The following is a 281-amino-acid chain: Carbonic anhydrase (281 aa).

Residues Cys-106, His-161, and Cys-164 each coordinate Zn(2+).

The protein belongs to the beta-class carbonic anhydrase family. The cofactor is Zn(2+).

It is found in the cytoplasm. It localises to the nucleus. Its subcellular location is the mitochondrion intermembrane space. The enzyme catalyses hydrogencarbonate + H(+) = CO2 + H2O. Its activity is regulated as follows. Amines and amino acids act as activators of catalytic activity, whereas natural product-based phenols, dithiocarbamates, aliphatic and aromatic carboxylates, boronic acids, and sulfonamides act as inhibitors of enzymatic activity. Also inhibited by anions such as cyanide and carbonate, and to a lesser extent by sulfate, phenylboronic, and phenyl arsonic acid. Its function is as follows. Catalyzes the reversible hydration of CO(2) to H(2)CO(3). The main role may be to provide inorganic carbon for the bicarbonate-dependent carboxylation reactions catalyzed by pyruvate carboxylase, acetyl-CoA carboxylase and carbamoyl-phosphate synthetase. Involved in protection against oxidative damage. Acts as a CO(2) chemosensor and induces CO(2)-mediated filamentation. Essential for pathological growth in niches where sufficient CO(2) is not supplied by the host. Necessary for white-to-opaque switching at low CO(2) concentrations. This chain is Carbonic anhydrase (NCE103), found in Candida albicans (strain SC5314 / ATCC MYA-2876) (Yeast).